Consider the following 98-residue polypeptide: MKINQPAVAGTLESGDVMIRIAPLDTQDIDLQINSSVEKQFGDAIRTTILEVLARYNVRGVQLNVDDKGALDCILRARLEALLARASGIPALPWEDCQ.

Ser14 is modified (O-(phosphoribosyl dephospho-coenzyme A)serine).

This sequence belongs to the CitD family. In terms of assembly, oligomer with a subunit composition of (alpha,beta,gamma)6.

The protein resides in the cytoplasm. Covalent carrier of the coenzyme of citrate lyase. The chain is Citrate lyase acyl carrier protein from Escherichia coli O81 (strain ED1a).